The following is a 762-amino-acid chain: MASLLQDQLTTDQDLLLMQEGMPMRKVRSKSWKKLRYFRLQNDGMTVWHARQARGSAKPSFSISDVDTIRNGHDSELLRSLAEELPLEQGFTVVFHGRRSNLDLVANSVEEAQMWMRGLQLLVDLVTSMDHQERLDQWLSDWFQRGDKNQDGKMSFQEVQRLLHLMNVEMDQEYAFSLFQAADTSQSGTLEGEEFVQFYKALTKRAEVQELFESFSADGQKLTLLEFLDFLREEQKERDCTSELALELIDHYEPSDSGKLRHVLSMDGFLSYLCSKDGDIFNPACLPIYQDMTQPLNHYFICSSHNTYLVGDQLCGQSSVEGYIRALKRGCRCVEVDVWDGPSGEPVVYHGHTLTSRILFKDVVATVAQYAFQTSDYPVILSLETHCSWEQQQTMARHLTEILGEQLLSTTLDGVLPTQLPSPEELRRRILVKGKKLTLEEDLEYEEEEAEPELEESELALESQFETEPEPQEQNLQSKDKKKKSKPILCPALSSLVIYLKSVSFRSFTHSKEHYHFYEISSFSETKAERLIKEAGNEFVQHNTWQLSRVYPSGLRTDSSNYNPQELWNAGCQMVAMNMQTAGLEMDICDGHFRQNGGCGYVLKPDFLRDIQSSFHPERPISPFKAQTLLIQVISGQQLPKVDKTKEGSIVDPLVKVQIFGVRLDTARQETNYVENNGFNPYWGETLCFRVLVPELAMLRFVVMDYDWKSRNDFIGQYTLPWTCMQQGYRHIHLLSKVGISLRPASIFVYICIQEDLEGDES.

The region spanning 16–124 is the PH domain; it reads LLMQEGMPMR…WMRGLQLLVD (109 aa). Residues 26–53 form a substrate binding region; it reads KVRSKSWKKLRYFRLQNDGMTVWHARQA. EF-hand domains lie at 134–169, 170–205, and 206–237; these read RLDQWLSDWFQRGDKNQDGKMSFQEVQRLLHLMNVE, MDQEYAFSLFQAADTSQSGTLEGEEFVQFYKALTKR, and AEVQELFESFSADGQKLTLLEFLDFLREEQKE. Residues D147, N149, D151, K153, E158, D183, S185, S187, T189, and E194 each coordinate Ca(2+). The GBA motif lies at 213 to 243; that stretch reads ESFSADGQKLTLLEFLDFLREEQKERDCTSE. Residues 290–435 form the PI-PLC X-box domain; it reads QDMTQPLNHY…LRRRILVKGK (146 aa). H305 is an active-site residue. Ca(2+) contacts are provided by N306, E335, and D337. H350 is an active-site residue. E384 contributes to the Ca(2+) binding site. 2 residues coordinate substrate: K433 and K435. Residues 443 to 471 are compositionally biased toward acidic residues; the sequence is LEYEEEEAEPELEESELALESQFETEPEP. The tract at residues 443–483 is disordered; sequence LEYEEEEAEPELEESELALESQFETEPEPQEQNLQSKDKKK. S457 bears the Phosphoserine mark. The PI-PLC Y-box domain maps to 493 to 609; the sequence is LSSLVIYLKS…GYVLKPDFLR (117 aa). The substrate site is built by S522 and R549. One can recognise a C2 domain in the interval 609 to 736; the sequence is RDIQSSFHPE…QGYRHIHLLS (128 aa). Residues I650, D652, N676, D705, Y706, and D707 each contribute to the Ca(2+) site. A PDZ-binding motif is present at residues 731–734; it reads HIHL.

In terms of assembly, interacts with GRIP1. Interacts (via GBA motif) with guanine nucleotide-binding protein G(i) alpha subunit GNAI3 (inactive GDP-bound form); low-affinity interaction. It depends on Ca(2+) as a cofactor.

The protein localises to the membrane. It is found in the nucleus. It localises to the cytoplasm. The protein resides in the endoplasmic reticulum. The enzyme catalyses a 1,2-diacyl-sn-glycero-3-phospho-(1D-myo-inositol-4,5-bisphosphate) + H2O = 1D-myo-inositol 1,4,5-trisphosphate + a 1,2-diacyl-sn-glycerol + H(+). It catalyses the reaction a 1,2-diacyl-sn-glycero-3-phospho-(1D-myo-inositol) + H2O = 1D-myo-inositol 1-phosphate + a 1,2-diacyl-sn-glycerol + H(+). In terms of biological role, hydrolyzes the phosphatidylinositol 4,5-bisphosphate (PIP2) to generate 2 second messenger molecules diacylglycerol (DAG) and inositol 1,4,5-trisphosphate (IP3). DAG mediates the activation of protein kinase C (PKC), while IP3 releases Ca(2+) from intracellular stores. Required for acrosome reaction in sperm during fertilization, probably by acting as an important enzyme for intracellular Ca(2+) mobilization in the zona pellucida-induced acrosome reaction. May play a role in cell growth. Modulates the liver regeneration in cooperation with nuclear PKC. Overexpression up-regulates the Erk signaling pathway and proliferation. The chain is 1-phosphatidylinositol 4,5-bisphosphate phosphodiesterase delta-4 (PLCD4) from Pongo abelii (Sumatran orangutan).